A 75-amino-acid chain; its full sequence is DNA-directed RNA polymerase subunit omega (75 aa).

This sequence belongs to the RNA polymerase subunit omega family. In terms of assembly, in cyanobacteria the RNAP catalytic core is composed of 2 alpha, 1 beta, 1 beta', 1 gamma and 1 omega subunit. When a sigma factor is associated with the core the holoenzyme is formed, which can initiate transcription.

The enzyme catalyses RNA(n) + a ribonucleoside 5'-triphosphate = RNA(n+1) + diphosphate. In terms of biological role, promotes RNA polymerase assembly. Latches the N- and C-terminal regions of the beta' subunit thereby facilitating its interaction with the beta and alpha subunits. This is DNA-directed RNA polymerase subunit omega from Microcystis aeruginosa (strain NIES-843 / IAM M-2473).